We begin with the raw amino-acid sequence, 584 residues long: MTLKPVLLAFLVASAYAQYGVAGMYENLPLETTTLDGSGDGSGADNGFVSGADAVAIDTDCSTKEDGLYAIGGCSPQFLTCSGGISRIMDCPADLIYDPRIVACEYSYNVPQCGGVPQDVTSTQEAYPSEETTVNPYAPVEEATTTPAEDVTVPEETTTEAYAPVDDYSTTTPAEDVPVPVETTASPYAPIVPYTTGAPAADEPVTRSAVTKSCVGKADGFYSFGECSDHYTACSNGYLIPMQCPARLAFDEARVICDYVMNVPECTNGSGNDEGSADETTPESSGEMPYSNGYGYEETTTVAEDVPSTKDYAEPIAAAYVARYPSEKTTAENVPTTTIGYEPEVVETTAPYVEETTTTVGYKPEVEETTTEAEVPTTTVGYEPEIVETTAPYVEETTTAADVPSTTAVYEPEVVETTTEAEVPTTTTVGYEPEVVETTVPYVEETTTAADVPTTTVGYEPEVEETTTEAEVPTTTVGYESEVVETTAADIPTTTIGYAPIVVESTTAADVPTTTVPAETTTEVPACVEGATAIEPCSQHYKNCVNGQEAIFICENGLFFSPEQARCAPADQIAECHQTTVQYY.

An N-terminal signal peptide occupies residues 1-17 (MTLKPVLLAFLVASAYA). A glycan (O-linked (Xyl...) (chondroitin sulfate) serine) is linked at serine 50. Chitin-binding type-2 domains are found at residues 58 to 115 (DTDC…QCGG), 211 to 268 (TKSC…ECTN), and 524 to 578 (VPAC…ECHQ). 2 disulfides stabilise this stretch: cysteine 91–cysteine 104 and cysteine 244–cysteine 257. The tract at residues 267 to 295 (TNGSGNDEGSADETTPESSGEMPYSNGYG) is disordered. A glycan (N-linked (GlcNAc...) asparagine) is linked at asparagine 268. An intrachain disulfide couples cysteine 554 to cysteine 567.

Expressed in the germline.

Required for polar body extrusion during cytokinesis in embryo development. Affects cortical granule size. Has roles in meiotic chromosome segregation, osmotic barrier function and polarization in conjunction with cpg-2. Binds chitin. The sequence is that of Chondroitin proteoglycan 1 (cpg-1) from Caenorhabditis elegans.